The primary structure comprises 211 residues: Protein GrpE (211 aa).

Positions M1–V13 are enriched in basic and acidic residues. Residues M1–P38 form a disordered region.

Belongs to the GrpE family. Homodimer.

Its subcellular location is the cytoplasm. Functionally, participates actively in the response to hyperosmotic and heat shock by preventing the aggregation of stress-denatured proteins, in association with DnaK and GrpE. It is the nucleotide exchange factor for DnaK and may function as a thermosensor. Unfolded proteins bind initially to DnaJ; upon interaction with the DnaJ-bound protein, DnaK hydrolyzes its bound ATP, resulting in the formation of a stable complex. GrpE releases ADP from DnaK; ATP binding to DnaK triggers the release of the substrate protein, thus completing the reaction cycle. Several rounds of ATP-dependent interactions between DnaJ, DnaK and GrpE are required for fully efficient folding. The polypeptide is Protein GrpE (Protochlamydia amoebophila (strain UWE25)).